The following is a 285-amino-acid chain: Bifunctional protein FolD (285 aa).

Residues 166–168 (GAS) and Ile232 each bind NADP(+).

It belongs to the tetrahydrofolate dehydrogenase/cyclohydrolase family. As to quaternary structure, homodimer.

The catalysed reaction is (6R)-5,10-methylene-5,6,7,8-tetrahydrofolate + NADP(+) = (6R)-5,10-methenyltetrahydrofolate + NADPH. It catalyses the reaction (6R)-5,10-methenyltetrahydrofolate + H2O = (6R)-10-formyltetrahydrofolate + H(+). The protein operates within one-carbon metabolism; tetrahydrofolate interconversion. With respect to regulation, the NAD(+)-dependent dehydrogenase is activated by inorganic phosphate. In terms of biological role, catalyzes the oxidation of 5,10-methylenetetrahydrofolate to 5,10-methenyltetrahydrofolate and then the hydrolysis of 5,10-methenyltetrahydrofolate to 10-formyltetrahydrofolate. This chain is Bifunctional protein FolD, found in Photobacterium phosphoreum.